We begin with the raw amino-acid sequence, 626 residues long: Janus kinase and microtubule-interacting protein 1 (626 aa).

The interval 1–25 (MSKKGRSKGDKPEAETDSVQMANEE) is disordered. A mediates association with microtubules region spans residues 1-365 (MSKKGRSKGD…KLKSLTRENV (365 aa)). Coiled-coil stretches lie at residues 13-255 (EAET…EAER) and 284-413 (ERDV…DDLS). Positions 365–626 (VEMKEKLSAQ…ILFEPKLKFM (262 aa)) are mediates interaction with TYK2 and GABBR1. The residue at position 382 (Ser-382) is a Phosphoserine. The segment covering 452–461 (ETLSETSYNT) has biased composition (polar residues). The disordered stretch occupies residues 452–481 (ETLSETSYNTDRTDRTPATPEEDLDETTTR). Thr-470 is subject to Phosphothreonine. A coiled-coil region spans residues 490 to 604 (QLTREYQALQ…EFRVLELEVR (115 aa)).

Belongs to the JAKMIP family. In terms of assembly, homodimer. Interacts with JAK1 and TYK2. Forms a complex with GABBR1 and KIF5B/kinesin-1. Phosphorylated.

The protein localises to the cytoplasm. It localises to the cytoskeleton. It is found in the membrane. Associates with microtubules and may play a role in the microtubule-dependent transport of the GABA-B receptor. May play a role in JAK1 signaling and regulate microtubule cytoskeleton rearrangements. This is Janus kinase and microtubule-interacting protein 1 (Jakmip1) from Mus musculus (Mouse).